Here is a 171-residue protein sequence, read N- to C-terminus: MNKANSFNKEELIACGHGKLFGPNSPRLPVDNMLMIDRIITINDNGGEFGKGEIVAELDINPDLWFFGCHFISDPVMPGCLGLDAMWQLVGFYLGWEGAEGKGRALGVGEVKFTGQVLPGAKKVTYKLNIKRTIHRKLVMGIADAILEVDGRQIYSATDLKVGVFSDTSTF.

Histidine 70 is an active-site residue.

Belongs to the thioester dehydratase family. FabA subfamily. In terms of assembly, homodimer.

The protein resides in the cytoplasm. The catalysed reaction is a (3R)-hydroxyacyl-[ACP] = a (2E)-enoyl-[ACP] + H2O. It catalyses the reaction (3R)-hydroxydecanoyl-[ACP] = (2E)-decenoyl-[ACP] + H2O. The enzyme catalyses (2E)-decenoyl-[ACP] = (3Z)-decenoyl-[ACP]. Its pathway is lipid metabolism; fatty acid biosynthesis. In terms of biological role, necessary for the introduction of cis unsaturation into fatty acids. Catalyzes the dehydration of (3R)-3-hydroxydecanoyl-ACP to E-(2)-decenoyl-ACP and then its isomerization to Z-(3)-decenoyl-ACP. Can catalyze the dehydratase reaction for beta-hydroxyacyl-ACPs with saturated chain lengths up to 16:0, being most active on intermediate chain length. The polypeptide is 3-hydroxydecanoyl-[acyl-carrier-protein] dehydratase (Shewanella sp. (strain MR-4)).